Consider the following 1556-residue polypeptide: MEPGSDDFLPPPECPVFEPSWAEFRDPLGYIAKIRPIAEKSGICKIRPPADWQPPFAVEVDNFRFTPRIQRLNELEAQTRVKLNYLDQIAKFWEIQGSSLKIPNVERRILDLYSLSKIVVEEGGYEAICKDRRWARVAQRLNYPPGKNIGSLLRSHYERIVYPYEMYQSGANLVQCNTRPFDNEEKDKEYKPHSIPLRQSVQPSKFNSYGRRAKRLQPDPEPTEEDIEKNPELKKLQIYGAGPKMMGLGLMAKDKTLRKKDKEGPECPPTVVVKEESGGDVKVESTSPKTFLESKEELSHSPEPCTKMTMRLRRNHSNAQFIESYVCRMCSRGDEDDKLLLCDGCDDNYHIFCLLPPLPEIPKGVWRCPKCVMAECKRPPEAFGFEQATREYTLQSFGEMADSFKADYFNMPVHMVPTELVEKEFWRLVNSIEEDVTVEYGADIHSKEFGSGFPVSDNKRHLTPEEEEYATSGWNLNVMPVLEQSVLCHINADISGMKVPWLYVGMVFSAFCWHIEDHWSYSINYLHWGEPKTWYGVPSLAAEHLEEVMKKLTPELFDSQPDLLHQLVTLMNPNTLMSHGVPVVRTNQCAGEFVITFPRAYHSGFNQGYNFAEAVNFCTADWLPAGRQCIEHYRRLRRYCVFSHEELICKMAACPEKLDLNLAAAVHKEMFIMVQEERRLRKALLEKGITEAEREAFELLPDDERQCIKCKTTCFLSALACYDCPDGLVCLSHINDLCKCSSSRQYLRYRYTLDELPAMLHKLKVRAESFDTWANKVRVALEVEDGRKRSLEELRALESEARERRFPNSELLQRLKNCLSEAEACVSRALGLVSGQEAGPHRVAGLQMTLAELRAFLDQMNNLPCAMHQIGDVKGILEQVEGYQAEAREALASLPSSPGLLQSLLERGQQLGVEVPEAQQLQRQVEQARWLDEVKRTLAPAARRGTLAVMRGLLVAGASVAPSPAVDKARAELQELLTIAERWEEKAHLCLEARQKHPPATLEAIIHEAENIPVHLPNIQALKEALAKARAWIADVDEIQNGDHYPCLDDLEGLVAVGRDLPVGLEELRQLELQVLTAHSWREKASKTFLKKNSCYTLLEVLCPCADAGSDSIKRSRWMEKELGLYKSDTELLGLSAQDLRDPGSVIVAFKEGEQKEKEGILQLRRTNSAKPSPLASSATASSATSVCVCGQVPAGVGALQCDLCQDWFHGRCVSVPRLLSSPRPSPTSSPLLAWWEWDTKFLCPLCMRSRRPRLETILALLVALQRLPVRLPEGEALQCLTERAISWQGRARQALASEDVTALLGRLAELRQRLQAEPRPEEPPTYPPAPASDPLREGSGKDMPKVQGLLENGDSVTSPEKVALGEGSDLELLSSLLPQLTGPALELPEATRAPLEELMLEGDLLEVTLDENHSIWQLLQAGQPPDMERIRTLLELEKAERHGSRARGRALERRRRRKVDRGGEGDDPAREELEPKRVRSSGPEAEEAQEEEELEEETGGEGPPQTLPTTGSPSTQENQNGLEPALATSGPSAPFSTLSPQLHVPCPQQPPQQQL.

The JmjN domain maps to 14–55 (CPVFEPSWAEFRDPLGYIAKIRPIAEKSGICKIRPPADWQPP). The 91-residue stretch at 79–169 (TRVKLNYLDQ…IVYPYEMYQS (91 aa)) folds into the ARID domain. Residues 197–207 (LRQSVQPSKFN) show a composition bias toward polar residues. Residues 197–227 (LRQSVQPSKFNSYGRRAKRLQPDPEPTEEDI) form a disordered region. Glycyl lysine isopeptide (Lys-Gly) (interchain with G-Cter in SUMO2) cross-links involve residues K205, K229, K244, and K274. Positions 257-303 (LRKKDKEGPECPPTVVVKEESGGDVKVESTSPKTFLESKEELSHSPE) are disordered. Over residues 273–283 (VKEESGGDVKV) the composition is skewed to basic and acidic residues. The residue at position 287 (S287) is a Phosphoserine. K295 is covalently cross-linked (Glycyl lysine isopeptide (Lys-Gly) (interchain with G-Cter in SUMO2)). S301 and S317 each carry phosphoserine. A PHD-type 1 zinc finger spans residues 324 to 374 (SYVCRMCSRGDEDDKLLLCDGCDDNYHIFCLLPPLPEIPKGVWRCPKCVMA). A JmjC domain is found at 468 to 634 (EYATSGWNLN…AGRQCIEHYR (167 aa)). H514, D517, and H602 together coordinate Fe cation. Residues S893 and S897 each carry the phosphoserine modification. Residue K1127 forms a Glycyl lysine isopeptide (Lys-Gly) (interchain with G-Cter in SUMO2) linkage. The PHD-type 2 zinc-finger motif lies at 1185–1250 (TSVCVCGQVP…KFLCPLCMRS (66 aa)). Disordered stretches follow at residues 1315 to 1362 (LQAE…SPEK) and 1441 to 1556 (ERHG…QQQL). The segment covering 1335-1345 (PLREGSGKDMP) has biased composition (basic and acidic residues). S1359 carries the post-translational modification Phosphoserine. Positions 1445–1460 (SRARGRALERRRRRKV) are enriched in basic residues. Basic and acidic residues predominate over residues 1461–1478 (DRGGEGDDPAREELEPKR). A compositionally biased stretch (acidic residues) spans 1485–1500 (EAEEAQEEEELEEETG). 2 stretches are compositionally biased toward polar residues: residues 1513–1522 (SPSTQENQNG) and 1530–1540 (SGPSAPFSTLS). A compositionally biased stretch (low complexity) spans 1541 to 1556 (PQLHVPCPQQPPQQQL).

This sequence belongs to the JARID1 histone demethylase family. As to quaternary structure, part of two distinct complexes, one containing E2F6, and the other containing REST. Interacts with ZMYND8. It depends on Fe(2+) as a cofactor.

Its subcellular location is the nucleus. The catalysed reaction is N(6),N(6),N(6)-trimethyl-L-lysyl(4)-[histone H3] + 3 2-oxoglutarate + 3 O2 = L-lysyl(4)-[histone H3] + 3 formaldehyde + 3 succinate + 3 CO2. Histone demethylase that specifically demethylates 'Lys-4' of histone H3, thereby playing a central role in histone code. Does not demethylate histone H3 'Lys-9', H3 'Lys-27', H3 'Lys-36', H3 'Lys-79' or H4 'Lys-20'. Demethylates trimethylated and dimethylated but not monomethylated H3 'Lys-4'. Participates in transcriptional repression of neuronal genes by recruiting histone deacetylases and REST at neuron-restrictive silencer elements. Represses the CLOCK-BMAL1 heterodimer-mediated transcriptional activation of the core clock component PER2. This chain is Lysine-specific demethylase 5C (KDM5C), found in Canis lupus familiaris (Dog).